The chain runs to 115 residues: Large ribosomal subunit protein uL22 (115 aa).

The protein belongs to the universal ribosomal protein uL22 family. Part of the 50S ribosomal subunit.

Its function is as follows. This protein binds specifically to 23S rRNA; its binding is stimulated by other ribosomal proteins, e.g. L4, L17, and L20. It is important during the early stages of 50S assembly. It makes multiple contacts with different domains of the 23S rRNA in the assembled 50S subunit and ribosome. Functionally, the globular domain of the protein is located near the polypeptide exit tunnel on the outside of the subunit, while an extended beta-hairpin is found that lines the wall of the exit tunnel in the center of the 70S ribosome. The sequence is that of Large ribosomal subunit protein uL22 from Coxiella burnetii (strain CbuG_Q212) (Coxiella burnetii (strain Q212)).